Here is a 275-residue protein sequence, read N- to C-terminus: NifU-like protein 5, mitochondrial (275 aa).

Residues 1 to 61 (MKGLTRLLNS…TNASRNCSRS (61 aa)) constitute a mitochondrion transit peptide.

Belongs to the NifU family.

Its subcellular location is the mitochondrion. Its function is as follows. Molecular scaffold for [Fe-S] cluster assembly of mitochondrial iron-sulfur proteins. The protein is NifU-like protein 5, mitochondrial (NIFU5) of Arabidopsis thaliana (Mouse-ear cress).